A 170-amino-acid polypeptide reads, in one-letter code: Universal stress protein MJ0531 (170 aa).

Belongs to the universal stress protein A family.

The chain is Universal stress protein MJ0531 from Methanocaldococcus jannaschii (strain ATCC 43067 / DSM 2661 / JAL-1 / JCM 10045 / NBRC 100440) (Methanococcus jannaschii).